The chain runs to 76 residues: uncharacterized protein (76 aa).

An N-terminal signal peptide occupies residues 1–22 (MFTKALSVVLLTCALFSGQLMA).

This is an uncharacterized protein from Escherichia coli O157:H7.